The primary structure comprises 318 residues: Probable mitochondrial 2-oxoglutarate/malate carrier protein (318 aa).

3 Solcar repeats span residues 22–111 (QSQL…IKDI), 119–210 (LPFT…TKQL), and 219–309 (DDIK…LNIL). 6 helical membrane-spanning segments follow: residues 28–48 (FVIG…IDSL), 79–99 (GFFT…TYTT), 125–145 (IMVG…ADLT), 185–205 (GCSP…SSYD), 225–245 (LIAS…LDVI), and 281–301 (FYKG…LTFI).

The protein belongs to the mitochondrial carrier (TC 2.A.29) family.

The protein localises to the mitochondrion inner membrane. Its function is as follows. Mitochondrial solute carriers shuttle metabolites, nucleotides, and cofactors through the mitochondrial inner membrane. Catalyzes the transport of 2-oxoglutarate across the inner mitochondrial membrane in an electroneutral exchange for malate or other dicarboxylic acids, and plays an important role in several metabolic processes, including the malate-aspartate shuttle, the oxoglutarate/isocitrate shuttle, in gluconeogenesis from lactate, and in nitrogen metabolism. The sequence is that of Probable mitochondrial 2-oxoglutarate/malate carrier protein (ucpC) from Dictyostelium discoideum (Social amoeba).